We begin with the raw amino-acid sequence, 872 residues long: DNA mismatch repair protein MutS (872 aa).

Residue 632-639 (GPNMGGKS) coordinates ATP.

This sequence belongs to the DNA mismatch repair MutS family.

In terms of biological role, this protein is involved in the repair of mismatches in DNA. It is possible that it carries out the mismatch recognition step. This protein has a weak ATPase activity. In Colwellia psychrerythraea (strain 34H / ATCC BAA-681) (Vibrio psychroerythus), this protein is DNA mismatch repair protein MutS.